Consider the following 609-residue polypeptide: Thiamine metabolism regulatory protein THI3 (609 aa).

The interval 578 to 598 (SKQVQEENENSSAVNTPTPEF) is disordered.

This sequence belongs to the TPP enzyme family. Mg(2+) serves as cofactor. Thiamine diphosphate is required as a cofactor.

It is found in the nucleus. It carries out the reaction 4-methyl-2-oxopentanoate + H(+) = 3-methylbutanal + CO2. It catalyses the reaction (S)-3-methyl-2-oxopentanoate + H(+) = 2-methylbutanal + CO2. It functions in the pathway amino-acid degradation; Ehrlich pathway. One of five 2-oxo acid decarboxylases (PDC1, PDC5, PDC6, ARO10, and THI3) involved in amino acid catabolism. The enzyme catalyzes the decarboxylation of amino acids, which, in a first step, have been transaminated to the corresponding 2-oxo acids (alpha-keto-acids). In a third step, the resulting aldehydes are reduced to alcohols, collectively referred to as fusel oils or alcohols. Its preferred substrates are the transaminated amino acids derived from leucine (4-methyl-2-oxopentanoate, also alpha-keto-isocaproate) and isoleucine ((3S)-3-methyl-2-oxopentanoate, also alpha-keto-beta-methylvalerate), whereas transaminated valine, transaminated aromatic amino acids, and pyruvate are no substrates. In analogy to the pyruvate decarboxylases the enzyme may in a side-reaction catalyze condensation (or carboligation) reactions leading to the formation of 2-hydroxy ketone, collectively called acyloins. The enzyme is also positively regulating the thiamine metabolism by a molecular mechanism that may involve thiamine concentration sensing and signal transmission. The polypeptide is Thiamine metabolism regulatory protein THI3 (THI3) (Saccharomyces cerevisiae (strain ATCC 204508 / S288c) (Baker's yeast)).